We begin with the raw amino-acid sequence, 497 residues long: Cobyrinate a,c-diamide synthase (497 aa).

The region spanning 273 to 478 (RIGIALDEAF…AHLHGVAYRE (206 aa)) is the GATase cobBQ-type domain. Residue C355 is the Nucleophile of the active site.

It belongs to the CobB/CbiA family. It depends on Mg(2+) as a cofactor.

It carries out the reaction cob(II)yrinate + 2 L-glutamine + 2 ATP + 2 H2O = cob(II)yrinate a,c diamide + 2 L-glutamate + 2 ADP + 2 phosphate + 2 H(+). The catalysed reaction is Ni-sirohydrochlorin + 2 L-glutamine + 2 ATP + 2 H2O = Ni-sirohydrochlorin a,c-diamide + 2 L-glutamate + 2 ADP + 2 phosphate + 2 H(+). It functions in the pathway cofactor biosynthesis; adenosylcobalamin biosynthesis; cob(II)yrinate a,c-diamide from sirohydrochlorin (anaerobic route): step 10/10. Functionally, catalyzes the ATP-dependent amidation of the two carboxylate groups at positions a and c of cobyrinate, using either L-glutamine or ammonia as the nitrogen source (Potential). Involved in the biosynthesis of the unique nickel-containing tetrapyrrole coenzyme F430, the prosthetic group of methyl-coenzyme M reductase (MCR), which plays a key role in methanogenesis and anaerobic methane oxidation. Catalyzes the ATP-dependent amidation of the two carboxylate groups at positions a and c of Ni-sirohydrochlorin, using L-glutamine or ammonia as the nitrogen source. This is Cobyrinate a,c-diamide synthase from Methanosarcina acetivorans (strain ATCC 35395 / DSM 2834 / JCM 12185 / C2A).